The chain runs to 407 residues: Probable tRNA sulfurtransferase (407 aa).

Positions 61–165 (NEITYRLSKI…LDAIYMYEEV (105 aa)) constitute a THUMP domain. ATP is bound by residues 183 to 184 (ML), 208 to 209 (HF), Arg265, Gly287, and Gln296.

This sequence belongs to the ThiI family.

Its subcellular location is the cytoplasm. The catalysed reaction is [ThiI sulfur-carrier protein]-S-sulfanyl-L-cysteine + a uridine in tRNA + 2 reduced [2Fe-2S]-[ferredoxin] + ATP + H(+) = [ThiI sulfur-carrier protein]-L-cysteine + a 4-thiouridine in tRNA + 2 oxidized [2Fe-2S]-[ferredoxin] + AMP + diphosphate. It carries out the reaction [ThiS sulfur-carrier protein]-C-terminal Gly-Gly-AMP + S-sulfanyl-L-cysteinyl-[cysteine desulfurase] + AH2 = [ThiS sulfur-carrier protein]-C-terminal-Gly-aminoethanethioate + L-cysteinyl-[cysteine desulfurase] + A + AMP + 2 H(+). It participates in cofactor biosynthesis; thiamine diphosphate biosynthesis. Functionally, catalyzes the ATP-dependent transfer of a sulfur to tRNA to produce 4-thiouridine in position 8 of tRNAs, which functions as a near-UV photosensor. Also catalyzes the transfer of sulfur to the sulfur carrier protein ThiS, forming ThiS-thiocarboxylate. This is a step in the synthesis of thiazole, in the thiamine biosynthesis pathway. The sulfur is donated as persulfide by IscS. This Staphylococcus aureus (strain MSSA476) protein is Probable tRNA sulfurtransferase.